The sequence spans 432 residues: Adenosylhomocysteinase (432 aa).

Substrate is bound by residues Thr57, Asp131, and Glu156. 157–159 (TTT) serves as a coordination point for NAD(+). At Ser183 the chain carries Phosphoserine. Substrate-binding residues include Lys186 and Asp190. N6-(2-hydroxyisobutyryl)lysine is present on Lys186. The residue at position 193 (Tyr193) is a Phosphotyrosine. NAD(+)-binding positions include 222–227 (GDVGKG), Glu243, Asn248, 299–301 (IGH), Asn346, His353, Lys426, 426–430 (KPDHY), and Tyr430.

The protein belongs to the adenosylhomocysteinase family. As to quaternary structure, homotetramer. Interaction with AHCYL1. Requires NAD(+) as cofactor.

It localises to the cytoplasm. The protein localises to the melanosome. Its subcellular location is the nucleus. It is found in the endoplasmic reticulum. It carries out the reaction S-adenosyl-L-homocysteine + H2O = L-homocysteine + adenosine. It functions in the pathway amino-acid biosynthesis; L-homocysteine biosynthesis; L-homocysteine from S-adenosyl-L-homocysteine: step 1/1. Functionally, catalyzes the hydrolysis of S-adenosyl-L-homocysteine to form adenosine and homocysteine. Binds copper ions. This Rattus norvegicus (Rat) protein is Adenosylhomocysteinase (Ahcy).